The following is a 316-amino-acid chain: MTVQPTTIGIVGARGHTGAELIKLIAAHPQLQLVFVSSRELAGQRVAEHSDGYQGELRYESLDADAVAAKAADVVILALPNGKAEPFVAAIDASRPQTLLIDLSADYRFDPAWYYGLPELTRHTYAGQRRISNPGCYATAMQLAITPLREQLAGPPQCFGVSGYSGAGTTPSDKNNPALLADNLMPYALTNHMHEREVSAQLGVPVEFMPHVAPHFRGITMTVNLWLQQPLTREQIHARYLERYAHEPLIEIVDEAPWVSRIAGTHGVQIGGFTVAPGNKRVVVVATLDNLLKGAATQAMQNLNLALGWDELTAIG.

The active site involves C136.

The protein belongs to the NAGSA dehydrogenase family. Type 1 subfamily.

Its subcellular location is the cytoplasm. The catalysed reaction is N-acetyl-L-glutamate 5-semialdehyde + phosphate + NADP(+) = N-acetyl-L-glutamyl 5-phosphate + NADPH + H(+). The protein operates within amino-acid biosynthesis; L-arginine biosynthesis; N(2)-acetyl-L-ornithine from L-glutamate: step 3/4. In terms of biological role, catalyzes the NADPH-dependent reduction of N-acetyl-5-glutamyl phosphate to yield N-acetyl-L-glutamate 5-semialdehyde. This chain is N-acetyl-gamma-glutamyl-phosphate reductase, found in Xanthomonas campestris pv. campestris (strain B100).